A 536-amino-acid polypeptide reads, in one-letter code: B3 domain-containing protein Os03g0619800 (536 aa).

Residues 26–119 constitute a DNA-binding region (TF-B3 1); sequence MRCFLRRMAA…RYEVLILDSD (94 aa). Residues 138–199 are disordered; the sequence is DKTVDPVDSS…VEPQTPSGSD (62 aa). Composition is skewed to low complexity over residues 145–160 and 171–183; these read DSSG…SSRS and SSSE…SPSG. Positions 231-330 form a DNA-binding region, TF-B3 2; sequence VAVMKKCNLQ…AFTVHLLQAE (100 aa). A disordered region spans residues 335-396; it reads RDGTDVHKIG…SDGPSEPPYI (62 aa). Residues 344–355 show a composition bias toward polar residues; that stretch reads GSSQNKRNSKMA. Over residues 372-382 the composition is skewed to basic and acidic residues; the sequence is SNKHGVSHESL. Residues 429-529 constitute a DNA-binding region (TF-B3 3); that stretch reads ISKLAGSGGK…TMEVHIISNL (101 aa).

It is found in the nucleus. This Oryza sativa subsp. japonica (Rice) protein is B3 domain-containing protein Os03g0619800.